The chain runs to 385 residues: Probable protein phosphatase 2C 38 (385 aa).

Residues 46-357 (VAGEFSMSVI…DDITVIVVFL (312 aa)) form the PPM-type phosphatase domain. Ser-77 carries the post-translational modification Phosphoserine. Positions 88, 89, 289, and 348 each coordinate Mn(2+).

This sequence belongs to the PP2C family. In terms of assembly, interacts with BIK1. Mg(2+) serves as cofactor. Mn(2+) is required as a cofactor. Phosphorylation at Ser-77 induces dissociation of PP2C38 from BIK1.

The protein resides in the cell membrane. It catalyses the reaction O-phospho-L-seryl-[protein] + H2O = L-seryl-[protein] + phosphate. The enzyme catalyses O-phospho-L-threonyl-[protein] + H2O = L-threonyl-[protein] + phosphate. In terms of biological role, may dephosphorylate and repress plasma membrane H(+)-ATPases (PM H(+)-ATPases, e.g. AHA1 and AHA2), thus influencing negatively plant growth and fitness. Involved in pathogen-associated molecular pattern (PAMP)-triggered immunity (PTI) signaling. Negatively regulates immune responses by controlling the phosphorylation and activation status of BIK1, a central rate-limiting kinase in PTI signaling. Impairs the phosphorylation of the NADPH oxidase RBOHD by BIK1. In Arabidopsis thaliana (Mouse-ear cress), this protein is Probable protein phosphatase 2C 38.